The sequence spans 695 residues: Threonine--tRNA ligase (695 aa).

The 76-residue stretch at 1–76 folds into the TGS domain; sequence MPRIPSPPQA…TTTDVVEPVT (76 aa). The catalytic stretch occupies residues 279 to 585; that stretch reads DHRKLGVELD…LLEHHAGAFP (307 aa). Positions 384, 435, and 562 each coordinate Zn(2+).

It belongs to the class-II aminoacyl-tRNA synthetase family. As to quaternary structure, homodimer. It depends on Zn(2+) as a cofactor.

Its subcellular location is the cytoplasm. It catalyses the reaction tRNA(Thr) + L-threonine + ATP = L-threonyl-tRNA(Thr) + AMP + diphosphate + H(+). In terms of biological role, catalyzes the attachment of threonine to tRNA(Thr) in a two-step reaction: L-threonine is first activated by ATP to form Thr-AMP and then transferred to the acceptor end of tRNA(Thr). Also edits incorrectly charged L-seryl-tRNA(Thr). This is Threonine--tRNA ligase from Leifsonia xyli subsp. xyli (strain CTCB07).